A 233-amino-acid polypeptide reads, in one-letter code: Small ribosomal subunit protein eS4 (233 aa).

Residues 37 to 99 (VPLVVVLRDV…RDEYYRVFPD (63 aa)) enclose the S4 RNA-binding domain.

It belongs to the eukaryotic ribosomal protein eS4 family.

The polypeptide is Small ribosomal subunit protein eS4 (Halobacterium salinarum (strain ATCC 29341 / DSM 671 / R1)).